The following is a 367-amino-acid chain: Beta sliding clamp (367 aa).

It belongs to the beta sliding clamp family. In terms of assembly, forms a ring-shaped head-to-tail homodimer around DNA which binds and tethers DNA polymerases and other proteins to the DNA. The DNA replisome complex has a single clamp-loading complex (3 tau and 1 each of delta, delta', psi and chi subunits) which binds 3 Pol III cores (1 core on the leading strand and 2 on the lagging strand) each with a beta sliding clamp dimer. Additional proteins in the replisome are other copies of gamma, psi and chi, Ssb, DNA helicase and RNA primase.

The protein resides in the cytoplasm. Functionally, confers DNA tethering and processivity to DNA polymerases and other proteins. Acts as a clamp, forming a ring around DNA (a reaction catalyzed by the clamp-loading complex) which diffuses in an ATP-independent manner freely and bidirectionally along dsDNA. Initially characterized for its ability to contact the catalytic subunit of DNA polymerase III (Pol III), a complex, multichain enzyme responsible for most of the replicative synthesis in bacteria; Pol III exhibits 3'-5' exonuclease proofreading activity. The beta chain is required for initiation of replication as well as for processivity of DNA replication. The protein is Beta sliding clamp (dnaN) of Pseudomonas aeruginosa (strain ATCC 15692 / DSM 22644 / CIP 104116 / JCM 14847 / LMG 12228 / 1C / PRS 101 / PAO1).